A 160-amino-acid chain; its full sequence is MAFTFAAFCYMLSLVLCAALIFFAIWHIIAFDELRTDFKSPIDQCNPVHARERLRNIERICFLLRKLVLPEYSIHSLFCVMFLCAQEWLTLGLNVPLLFYHFWRYFHCPADSSELAYDPPVVMNADTLSYCQKEAWCKLAFYLLSFFYYLYCMIYTLVSS.

The Cytoplasmic segment spans residues 1–10 (MAFTFAAFCY). The helical transmembrane segment at 11 to 31 (MLSLVLCAALIFFAIWHIIAF) threads the bilayer. The Lumenal segment spans residues 32–72 (DELRTDFKSPIDQCNPVHARERLRNIERICFLLRKLVLPEY). Residues 73–93 (SIHSLFCVMFLCAQEWLTLGL) traverse the membrane as a helical segment. The Cytoplasmic segment spans residues 94–138 (NVPLLFYHFWRYFHCPADSSELAYDPPVVMNADTLSYCQKEAWCK). A helical transmembrane segment spans residues 139–159 (LAFYLLSFFYYLYCMIYTLVS). Position 160 (Ser-160) is a topological domain, lumenal.

The protein belongs to the cornichon family. Acts as an auxiliary subunit for AMPA-selective glutamate receptors (AMPARs). Found in a complex with GRIA1, GRIA2, GRIA3, GRIA4, CNIH2, CACNG2, CACNG3, CACNG4, CACNG5, CACNG7 and CACNG8. Brain. Expressed in the neocortex, hippocampal formation, and cerebellum (at protein level).

It localises to the postsynaptic cell membrane. In terms of biological role, regulates the trafficking and gating properties of AMPA-selective glutamate receptors (AMPARs). Promotes their targeting to the cell membrane and synapses and modulates their gating properties by regulating their rates of activation, deactivation and desensitization. This Rattus norvegicus (Rat) protein is Protein cornichon homolog 3 (Cnih3).